Here is a 154-residue protein sequence, read N- to C-terminus: Xanthine-guanine phosphoribosyltransferase (154 aa).

Residues 37–38 (RG), Arg69, and 88–96 (EDLVDSGDT) contribute to the 5-phospho-alpha-D-ribose 1-diphosphate site. GMP is bound at residue Arg69. A Mg(2+)-binding site is contributed by Asp89. Residues Asp92 and Ile135 each coordinate guanine. The xanthine site is built by Asp92 and Ile135. Residues 92 to 96 (DSGDT) and 134 to 135 (WI) contribute to the GMP site.

It belongs to the purine/pyrimidine phosphoribosyltransferase family. XGPT subfamily. As to quaternary structure, homotetramer. Mg(2+) serves as cofactor.

It is found in the cell inner membrane. The enzyme catalyses GMP + diphosphate = guanine + 5-phospho-alpha-D-ribose 1-diphosphate. It carries out the reaction XMP + diphosphate = xanthine + 5-phospho-alpha-D-ribose 1-diphosphate. The catalysed reaction is IMP + diphosphate = hypoxanthine + 5-phospho-alpha-D-ribose 1-diphosphate. The protein operates within purine metabolism; GMP biosynthesis via salvage pathway; GMP from guanine: step 1/1. It functions in the pathway purine metabolism; XMP biosynthesis via salvage pathway; XMP from xanthine: step 1/1. In terms of biological role, purine salvage pathway enzyme that catalyzes the transfer of the ribosyl-5-phosphate group from 5-phospho-alpha-D-ribose 1-diphosphate (PRPP) to the N9 position of the 6-oxopurines guanine and xanthine to form the corresponding ribonucleotides GMP (guanosine 5'-monophosphate) and XMP (xanthosine 5'-monophosphate), with the release of PPi. To a lesser extent, also acts on hypoxanthine. The sequence is that of Xanthine-guanine phosphoribosyltransferase from Vibrio atlanticus (strain LGP32) (Vibrio splendidus (strain Mel32)).